We begin with the raw amino-acid sequence, 261 residues long: 3-methyl-2-oxobutanoate hydroxymethyltransferase (261 aa).

Positions 47 and 86 each coordinate Mg(2+). Residues 47–48, D86, and K116 contribute to the 3-methyl-2-oxobutanoate site; that span reads DS. E118 is a binding site for Mg(2+). Residue E186 is the Proton acceptor of the active site.

This sequence belongs to the PanB family. Homodecamer; pentamer of dimers. It depends on Mg(2+) as a cofactor.

It localises to the cytoplasm. It catalyses the reaction 3-methyl-2-oxobutanoate + (6R)-5,10-methylene-5,6,7,8-tetrahydrofolate + H2O = 2-dehydropantoate + (6S)-5,6,7,8-tetrahydrofolate. Its pathway is cofactor biosynthesis; (R)-pantothenate biosynthesis; (R)-pantoate from 3-methyl-2-oxobutanoate: step 1/2. Catalyzes the reversible reaction in which hydroxymethyl group from 5,10-methylenetetrahydrofolate is transferred onto alpha-ketoisovalerate to form ketopantoate. This is 3-methyl-2-oxobutanoate hydroxymethyltransferase from Thermosynechococcus vestitus (strain NIES-2133 / IAM M-273 / BP-1).